The following is a 142-amino-acid chain: Large ribosomal subunit protein uL13 (142 aa).

The protein belongs to the universal ribosomal protein uL13 family. As to quaternary structure, part of the 50S ribosomal subunit.

In terms of biological role, this protein is one of the early assembly proteins of the 50S ribosomal subunit, although it is not seen to bind rRNA by itself. It is important during the early stages of 50S assembly. The sequence is that of Large ribosomal subunit protein uL13 from Vesicomyosocius okutanii subsp. Calyptogena okutanii (strain HA).